Consider the following 239-residue polypeptide: UDP-2,3-diacylglucosamine hydrolase (239 aa).

Mn(2+) is bound by residues Asp8, His10, Asp41, Asn78, and His113. 78–79 contacts substrate; that stretch reads NR. 5 residues coordinate substrate: Asp121, Ser159, Asn163, Lys166, and His194. Mn(2+) is bound by residues His194 and His196.

It belongs to the LpxH family. The cofactor is Mn(2+).

The protein localises to the cell inner membrane. The catalysed reaction is UDP-2-N,3-O-bis[(3R)-3-hydroxytetradecanoyl]-alpha-D-glucosamine + H2O = 2-N,3-O-bis[(3R)-3-hydroxytetradecanoyl]-alpha-D-glucosaminyl 1-phosphate + UMP + 2 H(+). It functions in the pathway glycolipid biosynthesis; lipid IV(A) biosynthesis; lipid IV(A) from (3R)-3-hydroxytetradecanoyl-[acyl-carrier-protein] and UDP-N-acetyl-alpha-D-glucosamine: step 4/6. Its function is as follows. Hydrolyzes the pyrophosphate bond of UDP-2,3-diacylglucosamine to yield 2,3-diacylglucosamine 1-phosphate (lipid X) and UMP by catalyzing the attack of water at the alpha-P atom. Involved in the biosynthesis of lipid A, a phosphorylated glycolipid that anchors the lipopolysaccharide to the outer membrane of the cell. The protein is UDP-2,3-diacylglucosamine hydrolase of Shewanella sp. (strain MR-7).